Reading from the N-terminus, the 294-residue chain is MASFRRFRLLSPLKPCVTFGRMLYTRIDKDGLTMLAGHLAYVSLLSLVPLITVIFALFAAFPMFAEISIKLKAFIFANFMPATGDIIQNYLEQFVANSNRMTVVGTCGLIVTALLLIYSVDSVLNIIWRSKIQRSLVFSFAVYWMVLTLGPILVGASMVISSYLLSLHWLAHARVDSMIDEILRVFPLLISWVSFWLLYSVVPTVRVPARDALIGALVAALLFELGKKGFAMYITLFPSYQLIYGVLAVIPILFLWVYWSWCIVLLGAEITVTLGEYRAERHHAKNVITQSPEM.

Transmembrane regions (helical) follow at residues leucine 44 to phenylalanine 64, isoleucine 67 to isoleucine 87, glycine 108 to tryptophan 128, leucine 136 to alanine 156, valine 185 to valine 205, alanine 212 to methionine 232, and valine 246 to leucine 266.

The protein belongs to the UPF0761 family.

The protein localises to the cell inner membrane. This chain is UPF0761 membrane protein YPK_4186, found in Yersinia pseudotuberculosis serotype O:3 (strain YPIII).